A 275-amino-acid polypeptide reads, in one-letter code: Large ribosomal subunit protein uL2c (275 aa).

The disordered stretch occupies residues 219–267 (TVRGSVMNPCDHPHGGGEGRTPIGRTRPLTPWGKPALGKKTRKTKKLSS). Positions 255 to 264 (LGKKTRKTKK) are enriched in basic residues.

The protein belongs to the universal ribosomal protein uL2 family. In terms of assembly, part of the 50S ribosomal subunit.

The protein resides in the plastid. Its subcellular location is the chloroplast. The sequence is that of Large ribosomal subunit protein uL2c (rpl2) from Thalassiosira pseudonana (Marine diatom).